A 337-amino-acid chain; its full sequence is Mitochondrial amidoxime-reducing component 1 (337 aa).

A lipid anchor (N-myristoyl glycine) is attached at Gly2. Topologically, residues 2 to 20 (GAAGSSALARFVLLAQSRP) are mitochondrial matrix. A helical; Signal-anchor for type II membrane protein membrane pass occupies residues 21 to 40 (GWLGVAALGLTAVALGAVAW). Residues 41–337 (RRAWPTRRRR…VGDPVYLLGQ (297 aa)) lie on the Cytoplasmic side of the membrane. The Mo-molybdopterin site is built by Lys67, Ser68, and Arg92. Positions 93–183 (FWLVINQEGN…KSQPYRLVHF (91 aa)) are MOSC N-terminal region. Positions 187–335 (MRPRRPHQIA…IKVGDPVYLL (149 aa)) constitute an MOSC domain. Thr210, Ser211, Arg238, Asn240, Ser271, Arg272, Cys273, and Tyr317 together coordinate Mo-molybdopterin.

In terms of assembly, component of a complex composed of cytochrome b5, NADH-cytochrome b5 reductase and MTARC1. The cofactor is Mo-molybdopterin.

The protein localises to the mitochondrion outer membrane. The protein resides in the membrane. The enzyme catalyses N(omega)-hydroxy-L-arginine + 2 Fe(II)-[cytochrome b5] + 2 H(+) = L-arginine + 2 Fe(III)-[cytochrome b5] + H2O. Catalyzes the reduction of N-oxygenated molecules, acting as a counterpart of cytochrome P450 and flavin-containing monooxygenases in metabolic cycles. As a component of prodrug-converting system, reduces a multitude of N-hydroxylated prodrugs particularly amidoximes, leading to increased drug bioavailability. May be involved in mitochondrial N(omega)-hydroxy-L-arginine (NOHA) reduction, regulating endogenous nitric oxide levels and biosynthesis. Postulated to cleave the N-OH bond of N-hydroxylated substrates in concert with electron transfer from NADH to cytochrome b5 reductase then to cytochrome b5, the ultimate electron donor that primes the active site for substrate reduction. This is Mitochondrial amidoxime-reducing component 1 from Homo sapiens (Human).